The primary structure comprises 206 residues: Large ribosomal subunit protein uL4 (206 aa).

Residues 51 to 96 (LTRAEVKHSTKKPFRQKGTGNARAGMTSTPNRRGGGRAFPNKPDEN) are disordered.

The protein belongs to the universal ribosomal protein uL4 family. In terms of assembly, part of the 50S ribosomal subunit.

Its function is as follows. One of the primary rRNA binding proteins, this protein initially binds near the 5'-end of the 23S rRNA. It is important during the early stages of 50S assembly. It makes multiple contacts with different domains of the 23S rRNA in the assembled 50S subunit and ribosome. Forms part of the polypeptide exit tunnel. The sequence is that of Large ribosomal subunit protein uL4 from Chromobacterium violaceum (strain ATCC 12472 / DSM 30191 / JCM 1249 / CCUG 213 / NBRC 12614 / NCIMB 9131 / NCTC 9757 / MK).